The chain runs to 360 residues: Photosystem II protein D1 (360 aa).

3 consecutive transmembrane segments (helical) span residues 29-46, 118-133, and 142-156; these read YIGW…TATS, HFLL…EWEL, and WIFV…AASA. Residue H118 coordinates chlorophyll a. Y126 contributes to the pheophytin a binding site. The [CaMn4O5] cluster site is built by D170 and E189. The chain crosses the membrane as a helical span at residues 197–218; the sequence is FHMAGVAGVFGGSLFSAMHGSL. Residue H198 coordinates chlorophyll a. A quinone contacts are provided by residues H215 and 264-265; that span reads SF. H215 contacts Fe cation. A Fe cation-binding site is contributed by H272. The helical transmembrane segment at 274-288 threads the bilayer; sequence FLALWPVVGIWLTAM. [CaMn4O5] cluster contacts are provided by H332, E333, D342, and A344. The propeptide occupies 345–360; sequence SGEVLPVALTAPAVNG.

It belongs to the reaction center PufL/M/PsbA/D family. As to quaternary structure, PSII is composed of 1 copy each of membrane proteins PsbA, PsbB, PsbC, PsbD, PsbE, PsbF, PsbH, PsbI, PsbJ, PsbK, PsbL, PsbM, PsbT, PsbX, PsbY, PsbZ, Psb30/Ycf12, at least 3 peripheral proteins of the oxygen-evolving complex and a large number of cofactors. It forms dimeric complexes. It depends on The D1/D2 heterodimer binds P680, chlorophylls that are the primary electron donor of PSII, and subsequent electron acceptors. It shares a non-heme iron and each subunit binds pheophytin, quinone, additional chlorophylls, carotenoids and lipids. D1 provides most of the ligands for the Mn4-Ca-O5 cluster of the oxygen-evolving complex (OEC). There is also a Cl(-1) ion associated with D1 and D2, which is required for oxygen evolution. The PSII complex binds additional chlorophylls, carotenoids and specific lipids. as a cofactor. Post-translationally, tyr-161 forms a radical intermediate that is referred to as redox-active TyrZ, YZ or Y-Z. C-terminally processed by CTPA; processing is essential to allow assembly of the oxygen-evolving complex and thus photosynthetic growth.

It localises to the plastid. The protein localises to the chloroplast thylakoid membrane. The catalysed reaction is 2 a plastoquinone + 4 hnu + 2 H2O = 2 a plastoquinol + O2. In terms of biological role, photosystem II (PSII) is a light-driven water:plastoquinone oxidoreductase that uses light energy to abstract electrons from H(2)O, generating O(2) and a proton gradient subsequently used for ATP formation. It consists of a core antenna complex that captures photons, and an electron transfer chain that converts photonic excitation into a charge separation. The D1/D2 (PsbA/PsbD) reaction center heterodimer binds P680, the primary electron donor of PSII as well as several subsequent electron acceptors. This Phaeodactylum tricornutum (strain CCAP 1055/1) protein is Photosystem II protein D1.